The primary structure comprises 254 residues: Transcription factor CAULIFLOWER (254 aa).

The region spanning 1 to 61 is the MADS-box domain; that stretch reads MGRGRVEMKR…GKLFEYSSES (61 aa). Positions 90–180 constitute a K-box domain; that stretch reads QTNWSMEYSR…TKQIKERESI (91 aa). Residues 182–191 show a composition bias toward polar residues; the sequence is RTHQNQSEQQ. The disordered stretch occupies residues 182–205; the sequence is RTHQNQSEQQNRSHHVAPQPQPQL.

Homodimer capable of binding to CArG-box sequences.

It is found in the nucleus. Probable transcription factor that promotes early floral meristem identity in synergy with APETALA1, FRUITFULL and LEAFY. Is required subsequently for the transition of an inflorescence meristem into a floral meristem. Seems to be partially redundant to the function of APETALA1. In Brassica rapa subsp. pekinensis (Chinese cabbage), this protein is Transcription factor CAULIFLOWER (CAL).